A 166-amino-acid polypeptide reads, in one-letter code: Lipoprotein signal peptidase (166 aa).

The next 4 helical transmembrane spans lie at 10 to 30 (GGALAPWLGISLIVILFDQLT), 46 to 66 (LTPFFNLTLIYNRGAAFGFLA), 71 to 91 (WQRWAFTALGIGATLVICYLL), and 100 to 120 (FSLSLALILGGALGNVIDRLI). Active-site residues include D126 and D144. Residues 135–155 (WHWPAFNLADSAITVGAVLLI) traverse the membrane as a helical segment.

The protein belongs to the peptidase A8 family.

It localises to the cell inner membrane. The catalysed reaction is Release of signal peptides from bacterial membrane prolipoproteins. Hydrolyzes -Xaa-Yaa-Zaa-|-(S,diacylglyceryl)Cys-, in which Xaa is hydrophobic (preferably Leu), and Yaa (Ala or Ser) and Zaa (Gly or Ala) have small, neutral side chains.. It participates in protein modification; lipoprotein biosynthesis (signal peptide cleavage). Its function is as follows. This protein specifically catalyzes the removal of signal peptides from prolipoproteins. This Burkholderia thailandensis (strain ATCC 700388 / DSM 13276 / CCUG 48851 / CIP 106301 / E264) protein is Lipoprotein signal peptidase.